Here is a 169-residue protein sequence, read N- to C-terminus: Lipoprotein signal peptidase (169 aa).

3 helical membrane passes run 1–21 (MPESSRFGHLPWLLLSVLILV), 68–88 (WQRWFFAAIAIVVSVVLVVWL), and 94–114 (HETLLAVALAMVLGGALGNLY). Active-site residues include Asp124 and Asp143. The chain crosses the membrane as a helical span at residues 135-155 (FFPAFNLADTFITIGAILLAL).

Belongs to the peptidase A8 family.

The protein localises to the cell inner membrane. The enzyme catalyses Release of signal peptides from bacterial membrane prolipoproteins. Hydrolyzes -Xaa-Yaa-Zaa-|-(S,diacylglyceryl)Cys-, in which Xaa is hydrophobic (preferably Leu), and Yaa (Ala or Ser) and Zaa (Gly or Ala) have small, neutral side chains.. It functions in the pathway protein modification; lipoprotein biosynthesis (signal peptide cleavage). Its function is as follows. This protein specifically catalyzes the removal of signal peptides from prolipoproteins. This Ectopseudomonas mendocina (strain ymp) (Pseudomonas mendocina) protein is Lipoprotein signal peptidase.